Consider the following 2115-residue polypeptide: Non-reducing polyketide synthase ascC (2115 aa).

The tract at residues 1–21 is disordered; sequence MTLIQTKHSASAAVFSPQSTA. Positions 14 to 260 are N-terminal acylcarrier protein transacylase domain (SAT); sequence VFSPQSTAPK…HNSRNTELAQ (247 aa). The 425-residue stretch at 381–805 folds into the Ketosynthase family 3 (KS3) domain; the sequence is PDSIAIVGSA…GSNSALICSE (425 aa). Active-site for beta-ketoacyl synthase activity residues include Cys553, His689, and His728. The segment at 908–1210 is malonyl-CoA:ACP transacylase (MAT) domain; it reads LTFSGQSRTT…ANPSAHTFQA (303 aa). The For acyl/malonyl transferase activity role is filled by Ser995. An N-terminal hotdog fold region spans residues 1280 to 1406; that stretch reads PKKVQQLVTL…GDFFATSGEM (127 aa). In terms of domain architecture, PKS/mFAS DH spans 1280–1581; it reads PKKVQQLVTL…FMRIKAAKLE (302 aa). The segment at 1285 to 1580 is product template (PT) domain; sequence QLVTLKKTEG…QFMRIKAAKL (296 aa). His1315 serves as the catalytic Proton acceptor; for dehydratase activity. The segment at 1428–1581 is C-terminal hotdog fold; it reads DAERLRTATA…FMRIKAAKLE (154 aa). The Proton donor; for dehydratase activity role is filled by Asp1492. The tract at residues 1587–1624 is disordered; it reads ANPGSKTKSTNGNALPSVPRSVPAGPTSAPQQVAPTTM. A compositionally biased stretch (polar residues) spans 1588–1600; it reads NPGSKTKSTNGNA. Residues 1640–1724 form the Carrier domain; sequence PSKIADLKSL…PTAALTEGLV (85 aa). The residue at position 1674 (Ser1674) is an O-(pantetheine 4'-phosphoryl)serine. A compositionally biased stretch (polar residues) spans 1734–1748; it reads SDSIRNSTGFHTTIP. Residues 1734-1767 form a disordered region; it reads SDSIRNSTGFHTTIPATPAELHSNPPDSLDGSTV. Residues 1777-2107 form a thioesterase (TE) domain region; sequence ARFKLDTMVY…YDFLLGELEN (331 aa). Catalysis depends on for thioesterase activity residues Ser1897 and Asp2045.

It carries out the reaction 3 malonyl-CoA + acetyl-CoA + 2 H(+) = orsellinate + 3 CO2 + 4 CoA. The protein operates within secondary metabolite biosynthesis; terpenoid biosynthesis. Functionally, non-reducing polyketide synthase; part of the asc-1 gene cluster that mediates the biosynthesis of both ascochlorin and ascofuranone, a strong inhibitor of cyanide-insensitive alternative oxidases and a promising drug candidate against African trypanosomiasis. The first step in the pathway is performed by the non-reducing polyketide synthase ascC that produces orsellinic acid by condensing acetyl-CoA with 3 malonyl-CoA units. Orsellinic acid is then prenylated by the prenyltransferase ascA to yield ilicicolinic acid B. Ilicicolinic acid B is further reduced to ilicicolin B by the reductase ascB. The halogenase ascD then chlorinates ilicicolin B to produce ilicicolin A which is converted to ilicicolin A epoxide by the cytochrome P450 monooxygenase ascE that catalyzes stereoselective epoxidation of the terminal double bond of the prenyl group. Ilicicolin A epoxide is the last common precursor for the biosynthesis of ascofuranone and ascochlorin. The terpene cyclase ascF produces a monocyclic terpene, and the cyclization reaction is proposed to be initiated by protonation of the terminal epoxide of ilicicolin A epoxide to generate a monocyclic tertiarycation, which is followed by a series of hydride and methyl shifts with abstraction of proton, leading to the formation of the (14S,15R,19R)-trimethylcyclohexanone ring structure of ilicicolin C, which is finally reduced to ascochlorin by the dehydrogenase ascG. On the other hand, ilicicolin A epoxide is hydroxylated by the cytochrome P450 monooxygenase ascH, and the resultant product is cyclized by the terpene cyclase ascI to ascofuranol via protonation-initiated epoxide ring opening, which facilitates the 6-endo-tet cyclization to form the tetrahy-drofuran ring. Finally, ascofuranol is oxidized into ascofuranone by ascJ. The polypeptide is Non-reducing polyketide synthase ascC (Acremonium egyptiacum (Oospora egyptiaca)).